Consider the following 221-residue polypeptide: Small ribosomal subunit protein uS4c (221 aa).

Positions 26–53 are disordered; sequence RKRTDNRCMPGQHRKKRNDSTKKTKNSK. The segment covering 37–53 has biased composition (basic residues); it reads QHRKKRNDSTKKTKNSK. One can recognise an S4 RNA-binding domain in the interval 103–161; sequence MRLDNIVFRLGMAPTIPAARQLVNHGHIVVNNKKVDISSYQCQSQDVISVTKNKTIRTL.

The protein belongs to the universal ribosomal protein uS4 family. In terms of assembly, part of the 30S ribosomal subunit. Contacts protein S5. The interaction surface between S4 and S5 is involved in control of translational fidelity.

It localises to the plastid. The protein localises to the chloroplast. One of the primary rRNA binding proteins, it binds directly to 16S rRNA where it nucleates assembly of the body of the 30S subunit. Functionally, with S5 and S12 plays an important role in translational accuracy. This is Small ribosomal subunit protein uS4c (rps4) from Pleurastrum terricola (Filamentous green alga).